Reading from the N-terminus, the 337-residue chain is MSKINLLLLCGGGSAEHDISLMSANYFETSLAKSEQFSVLRVELDKFGQYRTAAGDDCELTNSREIRFRDESKTPWPVDYVIPCIHGYPGETGDIQSYFNLIQLPYFGCESEASSNCFNKITAKMWFSALGIPNTPYIFLNQFDDAAIEQTQAALAQWGSIFVKAASQGSSVGCYKVDDSDKVAGVLKDAFGYAPYVIVEKTIKARELEVAVYEYNGEVVATVPGEIICDTNTFYTFDEKYAKNSKARTDVVAQHVSAEISEQIRAYAIKAFKGMKLRHLSRIDFFLTADNEILLNEINTFPGSTPISMFPKMLQNHGHDFTEYLSLVINGQLTAKS.

In terms of domain architecture, ATP-grasp spans 124 to 330 (KMWFSALGIP…FTEYLSLVIN (207 aa)). Residue 154 to 209 (ALAQWGSIFVKAASQGSSVGCYKVDDSDKVAGVLKDAFGYAPYVIVEKTIKARELE) coordinates ATP. Mg(2+) is bound by residues aspartate 284, glutamate 297, and asparagine 299.

The protein belongs to the D-alanine--D-alanine ligase family. Mg(2+) is required as a cofactor. It depends on Mn(2+) as a cofactor.

It localises to the cytoplasm. It catalyses the reaction 2 D-alanine + ATP = D-alanyl-D-alanine + ADP + phosphate + H(+). It functions in the pathway cell wall biogenesis; peptidoglycan biosynthesis. In terms of biological role, cell wall formation. This is D-alanine--D-alanine ligase from Shewanella baltica (strain OS195).